A 557-amino-acid chain; its full sequence is Formate--tetrahydrofolate ligase (557 aa).

67–74 provides a ligand contact to ATP; it reads TPAGEGKT.

This sequence belongs to the formate--tetrahydrofolate ligase family.

The enzyme catalyses (6S)-5,6,7,8-tetrahydrofolate + formate + ATP = (6R)-10-formyltetrahydrofolate + ADP + phosphate. It functions in the pathway one-carbon metabolism; tetrahydrofolate interconversion. This chain is Formate--tetrahydrofolate ligase, found in Cereibacter sphaeroides (strain ATCC 17029 / ATH 2.4.9) (Rhodobacter sphaeroides).